A 272-amino-acid chain; its full sequence is Prohibitin 1 (272 aa).

A coiled-coil region spans residues 177-211 (KEFTEAVEMKQVAQQEAERARFIVEKAEQQKKAAV).

As to quaternary structure, the mitochondrial prohibitin complex consists of two subunits (PHB1 and PHB2), assembled into a membrane-associated ring-shaped supercomplex of approximately 1 mDa.

The protein resides in the mitochondrion inner membrane. It localises to the nucleus. Its subcellular location is the cytoplasm. It is found in the cell membrane. Protein with pleiotropic attributes mediated in a cell-compartment- and tissue-specific manner, which include the plasma membrane-associated cell signaling functions, mitochondrial chaperone, and transcriptional co-regulator of transcription factors in the nucleus. Functionally, in the mitochondria, together with PHB2, forms large ring complexes (prohibitin complexes) in the inner mitochondrial membrane (IMM) and functions as a chaperone protein that stabilizes mitochondrial respiratory enzymes and maintains mitochondrial integrity in the IMM, which is required for mitochondrial morphogenesis, neuronal survival, and normal lifespan. In terms of biological role, in the nucleus, acts as a transcription coregulator, enhances promoter binding by TP53, a transcription factor it activates, but reduces the promoter binding by E2F1, a transcription factor it represses. Its function is as follows. In the plasma membrane, cooperates with CD86 to mediate CD86-signaling in B lymphocytes that regulates the level of IgG1 produced through the activation of distal signaling intermediates. Upon CD40 engagement, required to activate NF-kappa-B signaling pathway via phospholipase C and protein kinase C activation. In Gallus gallus (Chicken), this protein is Prohibitin 1 (PHB1).